The chain runs to 376 residues: Cobalt-precorrin-5B C(1)-methyltransferase (376 aa).

The protein belongs to the CbiD family.

The enzyme catalyses Co-precorrin-5B + S-adenosyl-L-methionine = Co-precorrin-6A + S-adenosyl-L-homocysteine. It functions in the pathway cofactor biosynthesis; adenosylcobalamin biosynthesis; cob(II)yrinate a,c-diamide from sirohydrochlorin (anaerobic route): step 6/10. Functionally, catalyzes the methylation of C-1 in cobalt-precorrin-5B to form cobalt-precorrin-6A. The sequence is that of Cobalt-precorrin-5B C(1)-methyltransferase from Bradyrhizobium sp. (strain BTAi1 / ATCC BAA-1182).